Reading from the N-terminus, the 402-residue chain is Selenoprotein P (402 aa).

Residues 1-19 form the signal peptide; that stretch reads MWRGLGLALALCLLLTGGT. Sec59 is a non-standard amino acid (selenocysteine). N-linked (GlcNAc...) asparagine glycans are attached at residues Asn83 and Asn174. The tract at residues 196 to 291 is disordered; sequence KTAEASQRHH…VGSESLQPSL (96 aa). Over residues 203–231 the composition is skewed to basic residues; it reads RHHHPHPHSHPHPHPHPHPHPHPHPHHGH. 13 consecutive repeat copies span residues 204 to 205, 206 to 207, 208 to 209, 210 to 211, 212 to 213, 214 to 215, 216 to 217, 218 to 219, 220 to 221, 222 to 223, 224 to 225, 226 to 227, and 228 to 229. The tract at residues 204-229 is 13 X 2 AA tandem repeats of H-[PHS]; it reads HHHPHPHSHPHPHPHPHPHPHPHPHH. Basic and acidic residues predominate over residues 232–247; it reads QLHENAHLSESPKPDT. A compositionally biased stretch (basic residues) spans 259-269; the sequence is LHHHHHRHKGP. At Ser284 the chain carries Phosphoserine. Residues Sec297, Sec307, Sec338, Sec350, Sec363, Sec365, Sec372, Sec388, Sec390, Sec397, and Sec399 are each a non-standard amino acid (selenocysteine). The tract at residues 367–402 is disordered; that stretch reads LPPAAUQAAGQQLNPTEASTKUSUKNKAKMUKUPSN.

It belongs to the selenoprotein P family. Phosphorylation sites are present in the extracellular medium. As to expression, brain and kidney. Most prominently expressed in the cerebellar cortex, hippocampus and olfactory bulb.

The protein localises to the secreted. Functionally, constitutes a major selenium pool in the brain and may play an important role in developing and/or modulating the morphology of neurons and/or glial cells. The polypeptide is Selenoprotein P (Bos taurus (Bovine)).